The sequence spans 512 residues: Replication initiation protein (512 aa).

Functionally, essential for replication. Binds specifically to a 60-bp region corresponding to the putative origin of replication of pXO2. Also binds nonspecifically to single-stranded DNA with lower affinity. This Bacillus anthracis protein is Replication initiation protein (repS).